We begin with the raw amino-acid sequence, 203 residues long: MIGRLRGIILEKQPPIVLLETGGVGYEVHMPMTCFYELPEAGQEAIVFTHFVVREDAQLLYGFNNKQERTLFKELIKTNGVGPKLALAILSGMSAQQFVNAVEREELGALVKLPGIGKKTAERLIVEMKDRFKGLHGDLFTPAVDLVLTSPASPGSEDAEQEAVAALVALGYKPQEASRMVSKIARPDASSETLIRDALRAAL.

Residues 1 to 64 form a domain I region; the sequence is MIGRLRGIIL…EDAQLLYGFN (64 aa). A domain II region spans residues 65-142; that stretch reads NKQERTLFKE…KGLHGDLFTP (78 aa). The flexible linker stretch occupies residues 143-154; sequence AVDLVLTSPASP. The interval 155 to 203 is domain III; the sequence is GSEDAEQEAVAALVALGYKPQEASRMVSKIARPDASSETLIRDALRAAL.

Belongs to the RuvA family. Homotetramer. Forms an RuvA(8)-RuvB(12)-Holliday junction (HJ) complex. HJ DNA is sandwiched between 2 RuvA tetramers; dsDNA enters through RuvA and exits via RuvB. An RuvB hexamer assembles on each DNA strand where it exits the tetramer. Each RuvB hexamer is contacted by two RuvA subunits (via domain III) on 2 adjacent RuvB subunits; this complex drives branch migration. In the full resolvosome a probable DNA-RuvA(4)-RuvB(12)-RuvC(2) complex forms which resolves the HJ.

It is found in the cytoplasm. In terms of biological role, the RuvA-RuvB-RuvC complex processes Holliday junction (HJ) DNA during genetic recombination and DNA repair, while the RuvA-RuvB complex plays an important role in the rescue of blocked DNA replication forks via replication fork reversal (RFR). RuvA specifically binds to HJ cruciform DNA, conferring on it an open structure. The RuvB hexamer acts as an ATP-dependent pump, pulling dsDNA into and through the RuvAB complex. HJ branch migration allows RuvC to scan DNA until it finds its consensus sequence, where it cleaves and resolves the cruciform DNA. This Salmonella schwarzengrund (strain CVM19633) protein is Holliday junction branch migration complex subunit RuvA.